The chain runs to 382 residues: Lipid-A-disaccharide synthase (382 aa).

Belongs to the LpxB family.

The catalysed reaction is a lipid X + a UDP-2-N,3-O-bis[(3R)-3-hydroxyacyl]-alpha-D-glucosamine = a lipid A disaccharide + UDP + H(+). The protein operates within bacterial outer membrane biogenesis; LPS lipid A biosynthesis. Its function is as follows. Condensation of UDP-2,3-diacylglucosamine and 2,3-diacylglucosamine-1-phosphate to form lipid A disaccharide, a precursor of lipid A, a phosphorylated glycolipid that anchors the lipopolysaccharide to the outer membrane of the cell. The sequence is that of Lipid-A-disaccharide synthase from Alteromonas mediterranea (strain DSM 17117 / CIP 110805 / LMG 28347 / Deep ecotype).